The chain runs to 355 residues: Septin-2B (355 aa).

The region spanning 33 to 305 (KGFEFTLMVV…ENFRSERLKK (273 aa)) is the Septin-type G domain. Residues 43-50 (GESGLGKS) are G1 motif. Residues 43-50 (GESGLGKS), T77, G103, 182-190 (KADTLTLRE), G240, and R255 contribute to the GTP site. Residues 100-103 (DTPG) are G3 motif. The interval 181-184 (AKAD) is G4 motif. An important for dimerization region spans residues 259–269 (WGVVEVENPEH).

Belongs to the TRAFAC class TrmE-Era-EngA-EngB-Septin-like GTPase superfamily. Septin GTPase family. Septins polymerize into heterooligomeric protein complexes that form filaments, and associate with cellular membranes, actin filaments and microtubules. GTPase activity is required for filament formation. Can form heterooligomers with other family members and form filaments. Interacts with wdpcp.

The protein localises to the cytoplasm. The protein resides in the cytoskeleton. It localises to the spindle. Its subcellular location is the cleavage furrow. It is found in the midbody. The protein localises to the cell cortex. The protein resides in the cell projection. It localises to the cilium membrane. Filament-forming cytoskeletal GTPase. Required for normal organization of the actin cytoskeleton. Plays a role in the biogenesis of polarized columnar-shaped epithelium. Required for the progression through mitosis through regulation of chromosome congression. During anaphase, may be required for chromosome segregation and spindle elongation. Plays a role in ciliogenesis and collective cell movements including convergent extension during gastrulation. In cilia, required for the integrity of the diffusion barrier at the base of the primary cilium that prevents diffusion of transmembrane proteins between the cilia and plasma membranes. Controls cell shape and not polarization of cells during convergent extension. In Xenopus tropicalis (Western clawed frog), this protein is Septin-2B (sept2-B).